The primary structure comprises 37 residues: Large ribosomal subunit protein bL36 (37 aa).

This sequence belongs to the bacterial ribosomal protein bL36 family.

The chain is Large ribosomal subunit protein bL36 from Leptospira interrogans serogroup Icterohaemorrhagiae serovar Lai (strain 56601).